Reading from the N-terminus, the 251-residue chain is Probable transcriptional regulatory protein DehaBAV1_0421 (251 aa).

Belongs to the TACO1 family.

It localises to the cytoplasm. The sequence is that of Probable transcriptional regulatory protein DehaBAV1_0421 from Dehalococcoides mccartyi (strain ATCC BAA-2100 / JCM 16839 / KCTC 5957 / BAV1).